Consider the following 117-residue polypeptide: Hainantoxin-XV-5 (117 aa).

Positions 1–20 (MKLCAVIIASLLVCVAVASS) are cleaved as a signal peptide. Residues 20 to 55 (SSDNQKEFAQEKEMTREETQSLGEHEKDDEVTGSEE) are disordered. The propeptide occupies 21–56 (SDNQKEFAQEKEMTREETQSLGEHEKDDEVTGSEER). Residues 23–55 (NQKEFAQEKEMTREETQSLGEHEKDDEVTGSEE) show a composition bias toward basic and acidic residues. 4 disulfides stabilise this stretch: Cys-58/Cys-72, Cys-65/Cys-78, Cys-69/Cys-115, and Cys-71/Cys-91.

Belongs to the neurotoxin 03 (Tx2) family. 02 subfamily. HNTX-XV sub-subfamily. Expressed by the venom gland.

It is found in the secreted. In terms of biological role, putative ion channel inhibitor. The sequence is that of Hainantoxin-XV-5 from Cyriopagopus hainanus (Chinese bird spider).